The sequence spans 521 residues: Insulinoma-associated protein 1 (521 aa).

A compositionally biased stretch (basic residues) spans Met1 to Lys12. Residues Met1–Val20 form an SNAG domain region. 3 disordered regions span residues Met1–Leu59, Gly76–Pro107, and Ala180–Ala230. The tract at residues Pro2 to Val7 is required and sufficient for interaction with KDM1A. The tract at residues Pro43–Pro56 is necessary for interaction with CCND1. 2 stretches are compositionally biased toward pro residues: residues Pro43–Ala58 and Gly76–Pro85. The span at Ala209–Pro223 shows a compositional bias: low complexity. The C2H2-type 1; atypical zinc-finger motif lies at Phe272–Cys292. The segment at Tyr300 to His322 adopts a C2H2-type 2 zinc-finger fold. Positions Arg320–Glu369 are disordered. Residues Pro334–Glu346 are compositionally biased toward basic and acidic residues. The C2H2-type 3 zinc finger occupies Tyr373–His395. The interval Ala398 to Leu419 is disordered. Residues Ala404–Ala415 are compositionally biased toward pro residues. 2 C2H2-type zinc fingers span residues His452–His475 and Phe480–His503.

This sequence belongs to the INSM1 family. Interacts (via the N-terminal region) with CCND1 (via cyclin N-terminal domain); the interaction competes with the binding of CCND1 to CDK4 during cell cycle progression and increases its transcriptional repressor activity. Interacts with HDAC3; the interaction increases its transcriptional repressor activity. Interacts (via the SNAG domain) with HDAC1. Interacts (via the SNAG domain) with HDAC2. Interacts (via the SNAG domain) with KDM1A. Interacts (via the SNAG domain) with RCOR1. Interacts with SORBS1. Expressed in adrenal gland. Expressed in the dentate gyrus of the hippocampus and the wall of the lateral ventricle. Expressed in pancreatic and intestinal endocrine cells.

It localises to the nucleus. Sequence-specific DNA-binding transcriptional regulator that plays a key role in neurogenesis and neuroendocrine cell differentiation during embryonic and/or fetal development. Binds to the consensus sequence 5'-[TG][TC][TC][TT][GA]GGG[CG]A-3' in target promoters. Acts as a transcriptional repressor of NEUROD1 and INS expression via its interaction with cyclin CCND1 in a cell cycle-independent manner. Negatively regulates skeletal muscle-specific gene expression in endocrine cells of the pituitary by inhibiting the Notch signaling pathway. Represses target gene transcription by recruiting chromatin-modifying factors, such as HDAC1, HDAC2, HDAC3, KDM1A and RCOR1 histone deacetylases. Binds to its own promoter, suggesting autoregulation as a self-control feedback mechanism. Competes with histone H3 for the same binding site on the histone demethylase complex formed by KDM1A and RCOR1, and thereby inhibits demethylation of histone H3 at 'Lys-4'. Promotes the generation and expansion of neuronal basal progenitor cells in the developing neocortex. Involved in the differentiation of endocrine cells of the developing anterior pituitary gland, of the pancreas and intestine, and of sympatho-adrenal cells in the peripheral nervous system. Promotes cell cycle signaling arrest and inhibition of cellular proliferation. This Mus musculus (Mouse) protein is Insulinoma-associated protein 1 (Insm1).